Here is a 290-residue protein sequence, read N- to C-terminus: Probable protein phosphatase 2C 20 (290 aa).

The PPM-type phosphatase domain occupies alanine 31–phenylalanine 278. 4 residues coordinate Mn(2+): aspartate 68, glycine 69, aspartate 230, and aspartate 269.

This sequence belongs to the PP2C family. Mg(2+) is required as a cofactor. It depends on Mn(2+) as a cofactor.

It carries out the reaction O-phospho-L-seryl-[protein] + H2O = L-seryl-[protein] + phosphate. The catalysed reaction is O-phospho-L-threonyl-[protein] + H2O = L-threonyl-[protein] + phosphate. Its function is as follows. May be involved in defense signaling. The polypeptide is Probable protein phosphatase 2C 20 (PPC3-1.2) (Arabidopsis thaliana (Mouse-ear cress)).